The sequence spans 550 residues: Arginine--tRNA ligase (550 aa).

The 'HIGH' region motif lies at 130–140 (ANPTGPIHIGG).

This sequence belongs to the class-I aminoacyl-tRNA synthetase family. As to quaternary structure, monomer.

It is found in the cytoplasm. The enzyme catalyses tRNA(Arg) + L-arginine + ATP = L-arginyl-tRNA(Arg) + AMP + diphosphate. The sequence is that of Arginine--tRNA ligase from Mycolicibacterium paratuberculosis (strain ATCC BAA-968 / K-10) (Mycobacterium paratuberculosis).